The primary structure comprises 152 residues: Deoxyuridine 5'-triphosphate nucleotidohydrolase (152 aa).

Residues 71-73 (RSG), Asn84, 88-90 (LID), and Met98 each bind substrate.

The protein belongs to the dUTPase family. As to quaternary structure, homotrimer. The cofactor is Mg(2+).

The enzyme catalyses dUTP + H2O = dUMP + diphosphate + H(+). It participates in pyrimidine metabolism; dUMP biosynthesis; dUMP from dCTP (dUTP route): step 2/2. In terms of biological role, this enzyme is involved in nucleotide metabolism: it produces dUMP, the immediate precursor of thymidine nucleotides and it decreases the intracellular concentration of dUTP so that uracil cannot be incorporated into DNA. The protein is Deoxyuridine 5'-triphosphate nucleotidohydrolase of Escherichia coli O1:K1 / APEC.